The primary structure comprises 344 residues: Cyclin-G2 (344 aa).

The tract at residues C298–S324 is disordered. A compositionally biased stretch (acidic residues) spans S302–C313.

It belongs to the cyclin family. Cyclin G subfamily. As to expression, highest levels in intestine. Intermediate levels in spleen, brain and kidney. Low levels in testis, stomach, pancreas, liver, salivary gland and muscle. According to PubMed:9139721 also abundant in thymus.

It is found in the cytoplasm. The protein localises to the nucleus. In terms of biological role, may play a role in growth regulation and in negative regulation of cell cycle progression. This is Cyclin-G2 (Ccng2) from Mus musculus (Mouse).